The chain runs to 657 residues: L-glutamate oxidase precursor (657 aa).

Positions 1–12 (MTETPRDNSATR) are cleaved as a signal peptide. Positions 86, 87, 95, 120, 121, 350, 639, 647, and 648 each coordinate FAD.

It belongs to the flavin monoamine oxidase family. LGOX subfamily. In terms of assembly, the mature enzyme is a heterohexamer composed of 2 alpha chains, 2 beta chains and 2 gamma chains (alpha2beta2gamma2). FAD is required as a cofactor. Post-translationally, the precursor form is proteolytically cleaved by an endopeptidase into alpha, beta and gamma chains, which form the stable mature enzyme.

The protein resides in the secreted. It carries out the reaction L-glutamate + O2 + H2O = H2O2 + 2-oxoglutarate + NH4(+). With respect to regulation, proteinase K-treated enzyme exhibits improved affinity for the substrate, increased activity and increased thermostability. Functionally, catalyzes the oxidative deamination of L-glutamate to 2-ketoglutarate along with the production of ammonia and hydrogen peroxide. Exhibits strict specificity for L-glutamate, and shows only very weak activity with L-glutamine. The sequence is that of L-glutamate oxidase precursor from Streptomyces diastatochromogenes.